We begin with the raw amino-acid sequence, 267 residues long: MGQKINPHGFRLGITTDWKSRWYADKQYADYVKEDVAIRKLLATGMERAGISKVEIERTRDRVRVDIHTARPGIVIGRRGAEADRIRAELEKLTGKQVQLNILEVKNPESDAQLVAQGVAEQLSNRVAFRRAMRKAIQSAMRSPNVKGIRVQCSGRLGGAEMSRSEFYREGRVPLHTLRADIDYGLYEAKTTFGRIGVKVWIYKGDIVGGKRELTAASAPAGDRDRPRRERPSRPRRSGSTGTTATSTEAGRAATAVVEAPAENQEG.

Residues 38–106 form the KH type-2 domain; sequence IRKLLATGME…QVQLNILEVK (69 aa). A disordered region spans residues 215–267; it reads TAASAPAGDRDRPRRERPSRPRRSGSTGTTATSTEAGRAATAVVEAPAENQEG. The span at 222 to 233 shows a compositional bias: basic and acidic residues; the sequence is GDRDRPRRERPS. The segment covering 238–256 has biased composition (low complexity); the sequence is SGSTGTTATSTEAGRAATA.

It belongs to the universal ribosomal protein uS3 family. In terms of assembly, part of the 30S ribosomal subunit. Forms a tight complex with proteins S10 and S14.

Functionally, binds the lower part of the 30S subunit head. Binds mRNA in the 70S ribosome, positioning it for translation. This is Small ribosomal subunit protein uS3 from Nocardia farcinica (strain IFM 10152).